Consider the following 249-residue polypeptide: MNIYLIINHENQRIQNLIDKYHLKHDENSSMALIMNSNSLELYDRSKPRNKSIKVNFSSKKNNYRCLNFKKKNEILYKAIGIKKNYFPSVLDATAGLGQDSFLISFLGCYVIMMEYHPVIAALLTDGLERGYKDEKIGFWLKKRLHLIYDNSLNILNIPISQPDVIYLDPMYPINKKKSLPKKNMQFLRKLANKDDQSKNLLKVARKFAKKRVVVKRPSYANPISDEKVDFIISNKYHRFDIYLPFKKK.

Asp169 contributes to the S-adenosyl-L-methionine binding site.

The protein belongs to the methyltransferase superfamily. RsmJ family.

The protein resides in the cytoplasm. The enzyme catalyses guanosine(1516) in 16S rRNA + S-adenosyl-L-methionine = N(2)-methylguanosine(1516) in 16S rRNA + S-adenosyl-L-homocysteine + H(+). In terms of biological role, specifically methylates the guanosine in position 1516 of 16S rRNA. The protein is Ribosomal RNA small subunit methyltransferase J of Buchnera aphidicola subsp. Schizaphis graminum (strain Sg).